A 560-amino-acid polypeptide reads, in one-letter code: Protein AATF (560 aa).

N-acetylalanine is present on Ala-2. Phosphoserine occurs at positions 61 and 63. Residues 76–208 (TSRKAWNEDH…GDRNSEDDGV (133 aa)) are disordered. Positions 94–129 (SDEEISDEEGSGDEDSEGLGLEEYDEDDLGAAEEQE) are enriched in acidic residues. 2 positions are modified to phosphoserine: Ser-150 and Ser-155. Basic and acidic residues predominate over residues 156-165 (DFEKFTKGMD). Acidic residues predominate over residues 168–195 (GSSEEEEDEESGMEEGDDAEDSQGESEE). Ser-203, Ser-273, Ser-316, Ser-320, and Ser-321 each carry phosphoserine. The interval 273-315 (SALKNSHKALKALLRSLVGLQEELLFQYPDTRYLVDGTKPNAG) is POLR2J binding. Positions 309–333 (GTKPNAGSEEISSEDDELVEEKKQQ) are disordered. The RB1 binding stretch occupies residues 316–372 (SEEISSEDDELVEEKKQQRRRVPAKRKLEMEDYPSFMAKRFADFTVYRNRTLQKWHD). The RB1 and SP1 binding stretch occupies residues 373 to 472 (KTKLASGKLG…FYHQLLRELI (100 aa)).

The protein belongs to the AATF family. In terms of assembly, part of the small subunit (SSU) processome, composed of more than 70 proteins and the RNA chaperone small nucleolar RNA (snoRNA) U3. Interacts with POLR2J, RB1/RB, RBL1/P107 and RBL2/P130. Interacts with PAWR and SP1. May also bind MAPT. Post-translationally, hyperphosphorylated during the G1/S phase transition. As to expression, ubiquitously expressed. Expressed at high levels in brain, heart, kidney, placenta and thymus.

The protein resides in the nucleus. The protein localises to the nucleolus. In terms of biological role, part of the small subunit (SSU) processome, first precursor of the small eukaryotic ribosomal subunit. During the assembly of the SSU processome in the nucleolus, many ribosome biogenesis factors, an RNA chaperone and ribosomal proteins associate with the nascent pre-rRNA and work in concert to generate RNA folding, modifications, rearrangements and cleavage as well as targeted degradation of pre-ribosomal RNA by the RNA exosome. May function as a general inhibitor of the histone deacetylase HDAC1. Binding to the pocket region of RB1 may displace HDAC1 from RB1/E2F complexes, leading to activation of E2F target genes and cell cycle progression. Conversely, displacement of HDAC1 from SP1 bound to the CDKN1A promoter leads to increased expression of this CDK inhibitor and blocks cell cycle progression. Also antagonizes PAWR mediated induction of aberrant amyloid peptide production in Alzheimer disease (presenile and senile dementia), although the molecular basis for this phenomenon has not been described to date. This is Protein AATF from Homo sapiens (Human).